The sequence spans 1058 residues: Carbamoyl phosphate synthase large chain (1058 aa).

Residues Met1–Glu401 form a carboxyphosphate synthetic domain region. Positions 129, 169, 175, 176, 208, 210, 215, 241, 242, 243, 284, and 298 each coordinate ATP. An ATP-grasp 1 domain is found at Lys133 to Val327. Residues Gln284, Glu298, and Asn300 each contribute to the Mg(2+) site. The Mn(2+) site is built by Gln284, Glu298, and Asn300. The tract at residues Ile402 to Ser546 is oligomerization domain. The interval Val547 to Asn929 is carbamoyl phosphate synthetic domain. In terms of domain architecture, ATP-grasp 2 spans Glu671–Leu861. Positions 707, 746, 748, 752, 777, 778, 779, 780, 820, and 832 each coordinate ATP. Residues Gln820, Glu832, and Asn834 each coordinate Mg(2+). Mn(2+)-binding residues include Gln820, Glu832, and Asn834. The MGS-like domain maps to Ser930–Ile1058. The segment at Ser930–Ile1058 is allosteric domain.

It belongs to the CarB family. Composed of two chains; the small (or glutamine) chain promotes the hydrolysis of glutamine to ammonia, which is used by the large (or ammonia) chain to synthesize carbamoyl phosphate. Tetramer of heterodimers (alpha,beta)4. Requires Mg(2+) as cofactor. The cofactor is Mn(2+).

It catalyses the reaction hydrogencarbonate + L-glutamine + 2 ATP + H2O = carbamoyl phosphate + L-glutamate + 2 ADP + phosphate + 2 H(+). The enzyme catalyses hydrogencarbonate + NH4(+) + 2 ATP = carbamoyl phosphate + 2 ADP + phosphate + 2 H(+). The protein operates within amino-acid biosynthesis; L-arginine biosynthesis; carbamoyl phosphate from bicarbonate: step 1/1. It functions in the pathway pyrimidine metabolism; UMP biosynthesis via de novo pathway; (S)-dihydroorotate from bicarbonate: step 1/3. Large subunit of the glutamine-dependent carbamoyl phosphate synthetase (CPSase). CPSase catalyzes the formation of carbamoyl phosphate from the ammonia moiety of glutamine, carbonate, and phosphate donated by ATP, constituting the first step of 2 biosynthetic pathways, one leading to arginine and/or urea and the other to pyrimidine nucleotides. The large subunit (synthetase) binds the substrates ammonia (free or transferred from glutamine from the small subunit), hydrogencarbonate and ATP and carries out an ATP-coupled ligase reaction, activating hydrogencarbonate by forming carboxy phosphate which reacts with ammonia to form carbamoyl phosphate. This is Carbamoyl phosphate synthase large chain from Streptococcus pyogenes serotype M6 (strain ATCC BAA-946 / MGAS10394).